We begin with the raw amino-acid sequence, 441 residues long: Chromosome partition protein MukF (441 aa).

The segment at 208 to 236 (LDETSGNLRELQDTLNAAGDKLQAQLLRI) is leucine-zipper.

This sequence belongs to the MukF family. As to quaternary structure, interacts, and probably forms a ternary complex, with MukE and MukB via its C-terminal region. The complex formation is stimulated by calcium or magnesium. It is required for an interaction between MukE and MukB.

Its subcellular location is the cytoplasm. It is found in the nucleoid. Functionally, involved in chromosome condensation, segregation and cell cycle progression. May participate in facilitating chromosome segregation by condensation DNA from both sides of a centrally located replisome during cell division. Not required for mini-F plasmid partitioning. Probably acts via its interaction with MukB and MukE. Overexpression results in anucleate cells. It has a calcium binding activity. This is Chromosome partition protein MukF from Pasteurella multocida (strain Pm70).